Consider the following 615-residue polypeptide: Chaperone protein DnaK (615 aa).

Thr195 bears the Phosphothreonine; by autocatalysis mark. Positions 592–615 (EKGAQAASGKGPDDVIDADYKPAD) are disordered.

It belongs to the heat shock protein 70 family.

Acts as a chaperone. The sequence is that of Chaperone protein DnaK from Thermus thermophilus (strain ATCC BAA-163 / DSM 7039 / HB27).